The following is a 122-amino-acid chain: Large ribosomal subunit protein uL14 (122 aa).

Belongs to the universal ribosomal protein uL14 family. As to quaternary structure, part of the 50S ribosomal subunit. Forms a cluster with proteins L3 and L19. In the 70S ribosome, L14 and L19 interact and together make contacts with the 16S rRNA in bridges B5 and B8.

Binds to 23S rRNA. Forms part of two intersubunit bridges in the 70S ribosome. The protein is Large ribosomal subunit protein uL14 of Novosphingobium aromaticivorans (strain ATCC 700278 / DSM 12444 / CCUG 56034 / CIP 105152 / NBRC 16084 / F199).